Here is a 348-residue protein sequence, read N- to C-terminus: sn-glycerol-3-phosphate import ATP-binding protein UgpC 3 (348 aa).

The ABC transporter domain occupies 4 to 234 (INIIDVKKNY…PASLFVASFI (231 aa)). 36–43 (GPSGCGKS) is an ATP binding site.

This sequence belongs to the ABC transporter superfamily. sn-glycerol-3-phosphate importer (TC 3.A.1.1.3) family. As to quaternary structure, the complex is composed of two ATP-binding proteins (UgpC), two transmembrane proteins (UgpA and UgpE) and a solute-binding protein (UgpB).

The protein localises to the cell inner membrane. It catalyses the reaction sn-glycerol 3-phosphate(out) + ATP + H2O = sn-glycerol 3-phosphate(in) + ADP + phosphate + H(+). Its function is as follows. Part of the ABC transporter complex UgpBAEC involved in sn-glycerol-3-phosphate (G3P) import. Responsible for energy coupling to the transport system. This Rhizobium johnstonii (strain DSM 114642 / LMG 32736 / 3841) (Rhizobium leguminosarum bv. viciae) protein is sn-glycerol-3-phosphate import ATP-binding protein UgpC 3.